A 274-amino-acid polypeptide reads, in one-letter code: 2,3,4,5-tetrahydropyridine-2,6-dicarboxylate N-succinyltransferase (274 aa).

The protein belongs to the transferase hexapeptide repeat family.

The protein localises to the cytoplasm. The catalysed reaction is (S)-2,3,4,5-tetrahydrodipicolinate + succinyl-CoA + H2O = (S)-2-succinylamino-6-oxoheptanedioate + CoA. It functions in the pathway amino-acid biosynthesis; L-lysine biosynthesis via DAP pathway; LL-2,6-diaminopimelate from (S)-tetrahydrodipicolinate (succinylase route): step 1/3. This is 2,3,4,5-tetrahydropyridine-2,6-dicarboxylate N-succinyltransferase from Shigella boydii serotype 18 (strain CDC 3083-94 / BS512).